The sequence spans 298 residues: tRNA-uridine aminocarboxypropyltransferase 2 (298 aa).

Residue Met1 is modified to N-acetylmethionine. Residues 1–10 show a composition bias toward basic and acidic residues; that stretch reads MEPQAEERTL. Residues 1–55 form a disordered region; the sequence is MEPQAEERTLGEPAPPPSGALASPTPDEEERTEGGAPPTATPAGASGDSTSADGL. Residues 34-45 are compositionally biased toward low complexity; it reads GGAPPTATPAGA. A Phosphoserine modification is found at Ser132. The DXTW signature appears at 178–181; that stretch reads DGTW.

It belongs to the TDD superfamily. DTWD2 family.

Its subcellular location is the nucleus. It localises to the cytoplasm. The enzyme catalyses a uridine in tRNA + S-adenosyl-L-methionine = a 3-[(3S)-3-amino-3-carboxypropyl]uridine in tRNA + S-methyl-5'-thioadenosine + H(+). Catalyzes the formation of 3-(3-amino-3-carboxypropyl)uridine (acp3U) at position 20a in the D-loop of several cytoplasmic tRNAs (acp3U(20a)). Also has a weak activity to form acp3U at position 20 in the D-loop of tRNAs (acp3U(20)). Involved in glycoRNA biosynthesis by mediating formation of acp3U, which acts as an attachment site for N-glycans on tRNAs. GlycoRNAs consist of RNAs modified with secretory N-glycans that are presented on the cell surface. The sequence is that of tRNA-uridine aminocarboxypropyltransferase 2 from Mus musculus (Mouse).